The sequence spans 352 residues: 3-isopropylmalate dehydrogenase (352 aa).

Substrate-binding residues include R96, R106, R134, and D220. The Mg(2+) site is built by D220, D244, and D248. 277–289 (GSAPDIAGKNLAN) serves as a coordination point for NAD(+).

It belongs to the isocitrate and isopropylmalate dehydrogenases family. LeuB type 1 subfamily. As to quaternary structure, homodimer. Mg(2+) is required as a cofactor. It depends on Mn(2+) as a cofactor.

Its subcellular location is the cytoplasm. The catalysed reaction is (2R,3S)-3-isopropylmalate + NAD(+) = 4-methyl-2-oxopentanoate + CO2 + NADH. Its pathway is amino-acid biosynthesis; L-leucine biosynthesis; L-leucine from 3-methyl-2-oxobutanoate: step 3/4. In terms of biological role, catalyzes the oxidation of 3-carboxy-2-hydroxy-4-methylpentanoate (3-isopropylmalate) to 3-carboxy-4-methyl-2-oxopentanoate. The product decarboxylates to 4-methyl-2 oxopentanoate. The polypeptide is 3-isopropylmalate dehydrogenase (Desulfitobacterium hafniense (strain Y51)).